Consider the following 203-residue polypeptide: Thymidylate kinase (203 aa).

7-14 (GGEGAGKT) provides a ligand contact to ATP.

This sequence belongs to the thymidylate kinase family.

It catalyses the reaction dTMP + ATP = dTDP + ADP. In terms of biological role, phosphorylation of dTMP to form dTDP in both de novo and salvage pathways of dTTP synthesis. The chain is Thymidylate kinase from Chlamydia trachomatis serovar L2 (strain ATCC VR-902B / DSM 19102 / 434/Bu).